A 222-amino-acid polypeptide reads, in one-letter code: Interleukin-12 subunit alpha (222 aa).

The N-terminal stretch at 1-25 (MCPPRGLLLVTILVLLSHLDHLTWA) is a signal peptide. 3 cysteine pairs are disulfide-bonded: Cys40-Cys113, Cys67-Cys199, and Cys88-Cys126. N-linked (GlcNAc...) asparagine glycosylation is found at Asn42, Asn96, and Asn110.

It belongs to the IL-6 superfamily. Heterodimer with IL12B; disulfide-linked. This heterodimer is known as interleukin IL-12. Heterodimer with EBI3/IL27B; not disulfide-linked. This heterodimer is known as interleukin IL-35. Interacts with NBR1; this interaction promotes IL-12 secretion.

The protein resides in the secreted. Its function is as follows. Heterodimerizes with IL12B to form the IL-12 cytokine or with EBI3/IL27B to form the IL-35 cytokine. IL-12 is primarily produced by professional antigen-presenting cells (APCs) such as B-cells and dendritic cells (DCs) as well as macrophages and granulocytes and regulates T-cell and natural killer-cell responses, induces the production of interferon-gamma (IFN-gamma), favors the differentiation of T-helper 1 (Th1) cells and is an important link between innate resistance and adaptive immunity. Mechanistically, exerts its biological effects through a receptor composed of IL12R1 and IL12R2 subunits. Binding to the receptor results in the rapid tyrosine phosphorylation of a number of cellular substrates including the JAK family kinases TYK2 and JAK2. In turn, recruited STAT4 gets phosphorylated and translocates to the nucleus where it regulates cytokine/growth factor responsive genes. As part of IL-35, plays essential roles in maintaining the immune homeostasis of the liver microenvironment and also functions as an immune-suppressive cytokine. Mediates biological events through unconventional receptors composed of IL12RB2 and gp130/IL6ST heterodimers or homodimers. Signaling requires the transcription factors STAT1 and STAT4, which form a unique heterodimer that binds to distinct DNA sites. This chain is Interleukin-12 subunit alpha (IL12A), found in Canis lupus familiaris (Dog).